Consider the following 100-residue polypeptide: Acylphosphatase (100 aa).

In terms of domain architecture, Acylphosphatase-like spans 14 to 100 (RLSAWVHGHV…RGDLTGFEER (87 aa)). Residues Arg-29 and Asn-47 contribute to the active site.

Belongs to the acylphosphatase family.

The enzyme catalyses an acyl phosphate + H2O = a carboxylate + phosphate + H(+). In Nocardia farcinica (strain IFM 10152), this protein is Acylphosphatase (acyP).